The following is a 374-amino-acid chain: Ribosomal RNA large subunit methyltransferase G (374 aa).

This sequence belongs to the methyltransferase superfamily. RlmG family.

The protein localises to the cytoplasm. The enzyme catalyses guanosine(1835) in 23S rRNA + S-adenosyl-L-methionine = N(2)-methylguanosine(1835) in 23S rRNA + S-adenosyl-L-homocysteine + H(+). Specifically methylates the guanine in position 1835 (m2G1835) of 23S rRNA. The protein is Ribosomal RNA large subunit methyltransferase G of Pseudomonas putida (strain ATCC 700007 / DSM 6899 / JCM 31910 / BCRC 17059 / LMG 24140 / F1).